Reading from the N-terminus, the 328-residue chain is Porphobilinogen deaminase (328 aa).

An S-(dipyrrolylmethanemethyl)cysteine modification is found at Cys-250.

It belongs to the HMBS family. As to quaternary structure, monomer. The cofactor is dipyrromethane.

It carries out the reaction 4 porphobilinogen + H2O = hydroxymethylbilane + 4 NH4(+). It participates in porphyrin-containing compound metabolism; protoporphyrin-IX biosynthesis; coproporphyrinogen-III from 5-aminolevulinate: step 2/4. Functionally, tetrapolymerization of the monopyrrole PBG into the hydroxymethylbilane pre-uroporphyrinogen in several discrete steps. In Burkholderia ambifaria (strain ATCC BAA-244 / DSM 16087 / CCUG 44356 / LMG 19182 / AMMD) (Burkholderia cepacia (strain AMMD)), this protein is Porphobilinogen deaminase.